Consider the following 204-residue polypeptide: FlaA locus 22.9 kDa protein (204 aa).

Positions 115–140 are disordered; that stretch reads EKTAEDQKKSSEDHTEGSADSKASSE.

In Bacillus subtilis (strain 168), this protein is FlaA locus 22.9 kDa protein (ylxF).